We begin with the raw amino-acid sequence, 232 residues long: Orotate phosphoribosyltransferase (232 aa).

5-phospho-alpha-D-ribose 1-diphosphate contacts are provided by residues Arg-107, Lys-108, Lys-111, His-113, and 133-141 (EDLTTAGGS). Orotate is bound at residue Thr-137.

This sequence belongs to the purine/pyrimidine phosphoribosyltransferase family. PyrE subfamily. In terms of assembly, homodimer. It depends on Mg(2+) as a cofactor.

The enzyme catalyses orotidine 5'-phosphate + diphosphate = orotate + 5-phospho-alpha-D-ribose 1-diphosphate. The protein operates within pyrimidine metabolism; UMP biosynthesis via de novo pathway; UMP from orotate: step 1/2. In terms of biological role, catalyzes the transfer of a ribosyl phosphate group from 5-phosphoribose 1-diphosphate to orotate, leading to the formation of orotidine monophosphate (OMP). In Rhizobium meliloti (strain 1021) (Ensifer meliloti), this protein is Orotate phosphoribosyltransferase.